Here is a 334-residue protein sequence, read N- to C-terminus: Tryptophan--tRNA ligase (334 aa).

Residues 11-13 and 19-20 each bind ATP; these read QPS and GN. The 'HIGH' region motif lies at 12 to 20; the sequence is PSGELTIGN. Aspartate 135 lines the L-tryptophan pocket. ATP contacts are provided by residues 147–149, valine 186, and 195–199; these read GED and KMSKS. The short motif at 195–199 is the 'KMSKS' region element; it reads KMSKS.

It belongs to the class-I aminoacyl-tRNA synthetase family. In terms of assembly, homodimer.

It is found in the cytoplasm. It carries out the reaction tRNA(Trp) + L-tryptophan + ATP = L-tryptophyl-tRNA(Trp) + AMP + diphosphate + H(+). Catalyzes the attachment of tryptophan to tRNA(Trp). Amino acylates tRNA(Trp) with both L- and D-tryptophan, although D-tryptophan is a poor substrate. This is Tryptophan--tRNA ligase from Escherichia coli (strain K12).